The following is a 169-amino-acid chain: Protein pid-1 (169 aa).

Polar residues predominate over residues 137-151 (SGSPRITPQKHTPVS). Positions 137–169 (SGSPRITPQKHTPVSANHKPARSIFDDIPSNIA) are disordered.

As to quaternary structure, component of the pid-1 variant of the PETISCO complex (also called the pid-3, erh-2, tofu-6, and ife-3 small RNA complex) containing at least pid-1, tofu-6, ife-3, pid-3, and erh-2, which is required for the biogenesis of a class of 21 nucleotide PIWI-interacting RNAs (piRNAs) that possess a uracil residue at the 5'-end (also called 21U-RNAs). Within the complex interacts with pid-3; the interaction is direct. Within the complex interacts with erh-2. Within the complex interacts with tofu-6. Expressed predominantly in the germline (at protein level).

It localises to the cytoplasm. The protein resides in the nucleus. The protein localises to the perinuclear region. Functionally, component of the pid-1 variant of the PETISCO complex which is required for the biogenesis of a class of 21 nucleotide PIWI-interacting RNAs (piRNAs) that possess a uracil residue at the 5'-end (also called 21U-RNAs). Within the complex acts as an adapter which binds to the complex via erh-2. Involved in the biogenesis of 21U-RNAs which guide the piwi protein prg-1 to its DNA targets for silencing. Plays a role in small RNA-directed transgenerational epigenetic inheritance. In Caenorhabditis elegans, this protein is Protein pid-1.